Reading from the N-terminus, the 370-residue chain is Phosphate acyltransferase (370 aa).

The disordered stretch occupies residues 349–370; that stretch reads SAGRAGQDAPDEMAAPGRSEKR.

The protein belongs to the PlsX family. As to quaternary structure, homodimer. Probably interacts with PlsY.

The protein localises to the cytoplasm. It carries out the reaction a fatty acyl-[ACP] + phosphate = an acyl phosphate + holo-[ACP]. It functions in the pathway lipid metabolism; phospholipid metabolism. Catalyzes the reversible formation of acyl-phosphate (acyl-PO(4)) from acyl-[acyl-carrier-protein] (acyl-ACP). This enzyme utilizes acyl-ACP as fatty acyl donor, but not acyl-CoA. The polypeptide is Phosphate acyltransferase (Cereibacter sphaeroides (strain ATCC 17029 / ATH 2.4.9) (Rhodobacter sphaeroides)).